Consider the following 113-residue polypeptide: U11-theraphotoxin-Hhn1a (113 aa).

The first 21 residues, 1–21, serve as a signal peptide directing secretion; it reads MNTVRVTFLLVFVLAVSLGQA. Residues 22–74 constitute a propeptide that is removed on maturation; the sequence is DKDENRMEMQEKTEQGESYLDFAENLLLQKLEELEAKLLEEDSEESRNSRQKR. Disulfide bonds link C75–C90, C82–C95, and C89–C110.

Belongs to the neurotoxin 14 (magi-1) family. 01 (HNTX-16) subfamily. As to expression, expressed by the venom gland.

It localises to the secreted. Probable ion channel inhibitor. In Cyriopagopus hainanus (Chinese bird spider), this protein is U11-theraphotoxin-Hhn1a.